A 510-amino-acid polypeptide reads, in one-letter code: Replication factor C large subunit (510 aa).

Residue 48–55 (GPPGTGKT) coordinates ATP. Positions 459 to 510 (MESMLERKREESEVEEEAKEIEEAVEKAEEEEEREEKKKEGGGEQRTLDAFF) are disordered. Residues 493–510 (EEKKKEGGGEQRTLDAFF) are compositionally biased toward basic and acidic residues.

It belongs to the activator 1 small subunits family. RfcL subfamily. In terms of assembly, heteromultimer composed of small subunits (RfcS) and large subunits (RfcL).

Its function is as follows. Part of the RFC clamp loader complex which loads the PCNA sliding clamp onto DNA. This Methanopyrus kandleri (strain AV19 / DSM 6324 / JCM 9639 / NBRC 100938) protein is Replication factor C large subunit.